The following is a 474-amino-acid chain: Cryptochrome DASH (474 aa).

One can recognise a Photolyase/cryptochrome alpha/beta domain in the interval 2–136; the sequence is DTAVVWFRDD…ALRQRWTHTL (135 aa). Positions 161–171 are enriched in basic and acidic residues; sequence EAAATVRDPRS. The tract at residues 161-202 is disordered; that stretch reads EAAATVRDPRSAPETVPTPDGLTPGPVPTVESLGVSEPPTDD.

The protein belongs to the DNA photolyase class-1 family. FAD serves as cofactor. Requires (6R)-5,10-methylene-5,6,7,8-tetrahydrofolate as cofactor.

In terms of biological role, may have a photoreceptor function. Binds DNA; probably functions as a transcriptional repressor. This Natronomonas pharaonis (strain ATCC 35678 / DSM 2160 / CIP 103997 / JCM 8858 / NBRC 14720 / NCIMB 2260 / Gabara) (Halobacterium pharaonis) protein is Cryptochrome DASH (cry).